Reading from the N-terminus, the 304-residue chain is Release factor glutamine methyltransferase (304 aa).

Aspartate 144 and asparagine 188 together coordinate S-adenosyl-L-methionine. 188 to 191 lines the substrate pocket; sequence NPPY.

It belongs to the protein N5-glutamine methyltransferase family. PrmC subfamily.

The catalysed reaction is L-glutaminyl-[peptide chain release factor] + S-adenosyl-L-methionine = N(5)-methyl-L-glutaminyl-[peptide chain release factor] + S-adenosyl-L-homocysteine + H(+). Functionally, methylates the class 1 translation termination release factors RF1/PrfA and RF2/PrfB on the glutamine residue of the universally conserved GGQ motif. This is Release factor glutamine methyltransferase from Mycobacterium tuberculosis (strain ATCC 25618 / H37Rv).